The sequence spans 72 residues: Protein kish-A (72 aa).

Positions 1-26 are cleaved as a signal peptide; the sequence is MSAIFNFQSLLTVILLLICTCAYIRS. Topologically, residues 27–53 are extracellular; the sequence is LAPSILDRNKTGLLGIFWKCARIGERK. N-linked (GlcNAc...) asparagine glycosylation occurs at Asn-35. A helical transmembrane segment spans residues 54-71; that stretch reads SPYVAICCIVMAFSILFI. Gln-72 is a topological domain (cytoplasmic).

It belongs to the KISH family.

The protein resides in the golgi apparatus membrane. Its function is as follows. Involved in the early part of the secretory pathway. The polypeptide is Protein kish-A (Tmem167a) (Mus musculus (Mouse)).